The chain runs to 102 residues: Small ribosomal subunit protein uS14m (102 aa).

The protein belongs to the universal ribosomal protein uS14 family.

Its subcellular location is the mitochondrion. The chain is Small ribosomal subunit protein uS14m (RPS14) from Paramecium tetraurelia.